We begin with the raw amino-acid sequence, 344 residues long: Arginine N-succinyltransferase (344 aa).

Residue L125 coordinates succinyl-CoA. H229 serves as the catalytic Proton donor.

This sequence belongs to the arginine N-succinyltransferase family.

It catalyses the reaction succinyl-CoA + L-arginine = N(2)-succinyl-L-arginine + CoA + H(+). Its pathway is amino-acid degradation; L-arginine degradation via AST pathway; L-glutamate and succinate from L-arginine: step 1/5. Functionally, catalyzes the transfer of succinyl-CoA to arginine to produce N(2)-succinylarginine. The protein is Arginine N-succinyltransferase of Escherichia coli O17:K52:H18 (strain UMN026 / ExPEC).